A 271-amino-acid polypeptide reads, in one-letter code: Large ribosomal subunit protein uL3c (271 aa).

The transit peptide at 1–49 directs the protein to the chloroplast; the sequence is MAIAMAVVSFPSLLNKTTLSSSLFTPTFLPAKSSSLLIKSSPKTRFVVS. Residues 190–222 are disordered; that stretch reads HGSKSHRALGSIGAGTTPGRVYKGKKMPGRMGG.

It belongs to the universal ribosomal protein uL3 family. Part of the 50S ribosomal subunit.

Its subcellular location is the plastid. The protein localises to the chloroplast. In terms of biological role, one of the primary rRNA binding proteins, it binds directly near the 3'-end of the 23S rRNA, where it nucleates assembly of the 50S subunit. This Arabidopsis thaliana (Mouse-ear cress) protein is Large ribosomal subunit protein uL3c (RPL3A).